We begin with the raw amino-acid sequence, 189 residues long: Copper transport protein CTR2 (189 aa).

Topologically, residues 1–81 (MDDKKTWSTV…VVFEWWHIKT (81 aa)) are cytoplasmic. A helical membrane pass occupies residues 82–102 (LPGLILSCLAIFGLAYLYEYL). Residues 103–142 (KYCVHKRQLSQRVLLPNRSLTKINQADKVSNSILYGLQVG) are Vacuolar-facing. Residues 143-163 (FSFMLMLVFMTYNGWLMLAVV) form a helical membrane-spanning segment. The Cytoplasmic portion of the chain corresponds to 164-189 (CGAIWGNYSWCTSYSPEIDDSSLACH).

It belongs to the copper transporter (Ctr) (TC 1.A.56) family. SLC31A subfamily. In terms of assembly, homomultimer.

The protein resides in the vacuole membrane. Functionally, provides bioavailable copper via mobilization of vacuolar copper stores and export to the cytoplasm. This Saccharomyces cerevisiae (strain ATCC 204508 / S288c) (Baker's yeast) protein is Copper transport protein CTR2 (CTR2).